The sequence spans 130 residues: Small ribosomal subunit protein uS9 (130 aa).

Belongs to the universal ribosomal protein uS9 family.

The chain is Small ribosomal subunit protein uS9 from Sodalis glossinidius (strain morsitans).